We begin with the raw amino-acid sequence, 215 residues long: Pyrrolidone-carboxylate peptidase (215 aa).

Residues glutamate 80, cysteine 143, and histidine 167 contribute to the active site.

This sequence belongs to the peptidase C15 family. In terms of assembly, homotetramer.

The protein resides in the cytoplasm. The enzyme catalyses Release of an N-terminal pyroglutamyl group from a polypeptide, the second amino acid generally not being Pro.. Removes 5-oxoproline from various penultimate amino acid residues except L-proline. This is Pyrrolidone-carboxylate peptidase from Yersinia pestis bv. Antiqua (strain Antiqua).